We begin with the raw amino-acid sequence, 481 residues long: UDP-N-acetylmuramate--L-alanine ligase (481 aa).

115–121 is an ATP binding site; sequence GTHGKTT.

It belongs to the MurCDEF family.

The protein localises to the cytoplasm. The enzyme catalyses UDP-N-acetyl-alpha-D-muramate + L-alanine + ATP = UDP-N-acetyl-alpha-D-muramoyl-L-alanine + ADP + phosphate + H(+). It participates in cell wall biogenesis; peptidoglycan biosynthesis. Its function is as follows. Cell wall formation. This is UDP-N-acetylmuramate--L-alanine ligase from Rhodospirillum rubrum (strain ATCC 11170 / ATH 1.1.1 / DSM 467 / LMG 4362 / NCIMB 8255 / S1).